We begin with the raw amino-acid sequence, 498 residues long: Cytochrome P450 monooxygenase 71 (498 aa).

A helical transmembrane segment spans residues Y7–S24. N425 carries an N-linked (GlcNAc...) asparagine glycan. C440 contributes to the heme binding site.

The protein belongs to the cytochrome P450 family. It depends on heme as a cofactor.

It is found in the membrane. It functions in the pathway secondary metabolite biosynthesis. Its function is as follows. Cytochrome P450 monooxygenase that is able to use dehydroabietic acid and testosterone as substrates for oxidation, suggesting that the natural substrate(s) may be structurally related to steroid compounds. The polypeptide is Cytochrome P450 monooxygenase 71 (Postia placenta (strain ATCC 44394 / Madison 698-R) (Brown rot fungus)).